The chain runs to 116 residues: Promotilin (116 aa).

Residues 1–25 (MVSRKAVAVLLMVHVAVMLASQTEA) form the signal peptide. Positions 39-74 (REKERNKGQKKSLIVQQRSEEVGPLDPVEPPEEEEN) are disordered.

It belongs to the motilin family.

It localises to the secreted. Functionally, plays an important role in the regulation of interdigestive gastrointestinal motility and indirectly causes rhythmic contraction of duodenal and colonic smooth muscle. This Felis catus (Cat) protein is Promotilin (MLN).